The sequence spans 874 residues: Alanine--tRNA ligase (874 aa).

The Zn(2+) site is built by histidine 563, histidine 567, cysteine 665, and histidine 669.

The protein belongs to the class-II aminoacyl-tRNA synthetase family. Requires Zn(2+) as cofactor.

It localises to the cytoplasm. The enzyme catalyses tRNA(Ala) + L-alanine + ATP = L-alanyl-tRNA(Ala) + AMP + diphosphate. Functionally, catalyzes the attachment of alanine to tRNA(Ala) in a two-step reaction: alanine is first activated by ATP to form Ala-AMP and then transferred to the acceptor end of tRNA(Ala). Also edits incorrectly charged Ser-tRNA(Ala) and Gly-tRNA(Ala) via its editing domain. This chain is Alanine--tRNA ligase, found in Actinobacillus pleuropneumoniae serotype 5b (strain L20).